Here is a 253-residue protein sequence, read N- to C-terminus: REF/SRPP-like protein Os05g0151300/LOC_Os05g05940 (253 aa).

Residues 1-26 (MADSGSDAPISNRPEEEVTVEKTPEM) form a disordered region. Over residues 13-26 (RPEEEVTVEKTPEM) the composition is skewed to basic and acidic residues.

The protein belongs to the REF/SRPP family.

The sequence is that of REF/SRPP-like protein Os05g0151300/LOC_Os05g05940 from Oryza sativa subsp. japonica (Rice).